Consider the following 454-residue polypeptide: Septin-10 (454 aa).

A Septin-type G domain is found at 63-329; that stretch reads QGFCFNILCV…ELYRRCKLEE (267 aa). A G1 motif region spans residues 73–80; sequence GETGIGKS. GTP-binding positions include 73–80, G128, 209–217, G263, and R278; these read GETGIGKS and KADTVSKTE. Residues 125–128 form a G3 motif region; the sequence is NTVG. The interval 208–211 is G4 motif; sequence AKAD.

The protein belongs to the TRAFAC class TrmE-Era-EngA-EngB-Septin-like GTPase superfamily. Septin GTPase family. As to quaternary structure, septins polymerize into heterooligomeric protein complexes that form filaments, and can associate with cellular membranes, actin filaments and microtubules. GTPase activity is required for filament formation. Interacts with ADGB. In terms of processing, proteolytically cleaved in vitro in a calmodulin-dependent manner. In terms of tissue distribution, widely expressed. Abundantly expressed in heart and kidney, placenta, skeletal muscles, liver and lung, as well as various tumor cell lines.

The protein localises to the cytoplasm. Its subcellular location is the cytoskeleton. The protein resides in the cell projection. It is found in the cilium. It localises to the flagellum. Functionally, filament-forming cytoskeletal GTPase. May play a role in cytokinesis (Potential). The polypeptide is Septin-10 (Homo sapiens (Human)).